A 380-amino-acid chain; its full sequence is Phospho-N-acetylmuramoyl-pentapeptide-transferase (380 aa).

11 helical membrane-spanning segments follow: residues 26–46 (IVAAGLTAMVLGLLLGPIFIE), 75–95 (MGGALILASVAIATLLFADLA), 98–118 (FVWAALLVTLGYGAIGFTDDW), 135–155 (LVLQVLVVVVVYYACLTDWRF), 161–181 (FPWVFVGSYVDLHVTLPFVPS), 183–203 (LFNPDLGFLYLPFMVFVVIAT), 222–242 (VVSAMTFLALSYVAGATIAGF), 259–279 (LGVFCSAIFGAGVAFLWYNTY), 283–303 (VFMGDVGSLALGGGLGMMAVL), 311–331 (AILHGVFLTETVSVILQVWSF), and 357–377 (KIIVRFWIISVMLALVALLSI).

It belongs to the glycosyltransferase 4 family. MraY subfamily. Mg(2+) is required as a cofactor.

The protein localises to the cell inner membrane. It catalyses the reaction UDP-N-acetyl-alpha-D-muramoyl-L-alanyl-gamma-D-glutamyl-meso-2,6-diaminopimeloyl-D-alanyl-D-alanine + di-trans,octa-cis-undecaprenyl phosphate = di-trans,octa-cis-undecaprenyl diphospho-N-acetyl-alpha-D-muramoyl-L-alanyl-D-glutamyl-meso-2,6-diaminopimeloyl-D-alanyl-D-alanine + UMP. It participates in cell wall biogenesis; peptidoglycan biosynthesis. Its function is as follows. Catalyzes the initial step of the lipid cycle reactions in the biosynthesis of the cell wall peptidoglycan: transfers peptidoglycan precursor phospho-MurNAc-pentapeptide from UDP-MurNAc-pentapeptide onto the lipid carrier undecaprenyl phosphate, yielding undecaprenyl-pyrophosphoryl-MurNAc-pentapeptide, known as lipid I. The protein is Phospho-N-acetylmuramoyl-pentapeptide-transferase of Anaeromyxobacter dehalogenans (strain 2CP-1 / ATCC BAA-258).